The chain runs to 486 residues: Protein nucleotidyltransferase YdiU (486 aa).

Positions 90, 92, 93, 113, 125, 126, 176, and 183 each coordinate ATP. The Proton acceptor role is filled by D252. Mg(2+) contacts are provided by N253 and D262. Residue D262 coordinates ATP.

This sequence belongs to the SELO family. Mg(2+) serves as cofactor. The cofactor is Mn(2+).

It carries out the reaction L-seryl-[protein] + ATP = 3-O-(5'-adenylyl)-L-seryl-[protein] + diphosphate. The enzyme catalyses L-threonyl-[protein] + ATP = 3-O-(5'-adenylyl)-L-threonyl-[protein] + diphosphate. The catalysed reaction is L-tyrosyl-[protein] + ATP = O-(5'-adenylyl)-L-tyrosyl-[protein] + diphosphate. It catalyses the reaction L-histidyl-[protein] + UTP = N(tele)-(5'-uridylyl)-L-histidyl-[protein] + diphosphate. It carries out the reaction L-seryl-[protein] + UTP = O-(5'-uridylyl)-L-seryl-[protein] + diphosphate. The enzyme catalyses L-tyrosyl-[protein] + UTP = O-(5'-uridylyl)-L-tyrosyl-[protein] + diphosphate. Functionally, nucleotidyltransferase involved in the post-translational modification of proteins. It can catalyze the addition of adenosine monophosphate (AMP) or uridine monophosphate (UMP) to a protein, resulting in modifications known as AMPylation and UMPylation. The polypeptide is Protein nucleotidyltransferase YdiU (Stutzerimonas stutzeri (strain A1501) (Pseudomonas stutzeri)).